The chain runs to 344 residues: Biotin synthase (344 aa).

In terms of domain architecture, Radical SAM core spans 36-260; sequence NQIQISTLLS…MMPTSYIRLS (225 aa). Residues Cys-51, Cys-55, and Cys-58 each contribute to the [4Fe-4S] cluster site. The [2Fe-2S] cluster site is built by Cys-95, Cys-126, Cys-186, and Arg-258.

The protein belongs to the radical SAM superfamily. Biotin synthase family. Homodimer. Requires [4Fe-4S] cluster as cofactor. [2Fe-2S] cluster serves as cofactor.

It carries out the reaction (4R,5S)-dethiobiotin + (sulfur carrier)-SH + 2 reduced [2Fe-2S]-[ferredoxin] + 2 S-adenosyl-L-methionine = (sulfur carrier)-H + biotin + 2 5'-deoxyadenosine + 2 L-methionine + 2 oxidized [2Fe-2S]-[ferredoxin]. It participates in cofactor biosynthesis; biotin biosynthesis; biotin from 7,8-diaminononanoate: step 2/2. Catalyzes the conversion of dethiobiotin (DTB) to biotin by the insertion of a sulfur atom into dethiobiotin via a radical-based mechanism. The sequence is that of Biotin synthase from Buchnera aphidicola subsp. Baizongia pistaciae (strain Bp).